The primary structure comprises 73 residues: Putative neurotoxin NaH-Cpp1a (73 aa).

The signal sequence occupies residues 1–23 (MKSFYGILCVAVLMMFHLEMSES). Cystine bridges form between C43/C58, C50/C63, and C57/C70.

Expressed outside of acontia.

Its subcellular location is the secreted. It is found in the nematocyst. Putative neurotoxin. This Calliactis polypus (Hermit crab anemone) protein is Putative neurotoxin NaH-Cpp1a.